Consider the following 75-residue polypeptide: uncharacterized protein (75 aa).

The signal sequence occupies residues 1–18 (MRKYLSARSMCCSFFSCA).

This is an uncharacterized protein from Treponema pallidum (strain Nichols).